We begin with the raw amino-acid sequence, 508 residues long: 4-trimethylaminobutyraldehyde dehydrogenase A (508 aa).

Residues lysine 194 and 246 to 250 (GSVPT) contribute to the NAD(+) site. The Proton acceptor role is filled by glutamate 268. Cysteine 302 acts as the Nucleophile in catalysis. An NAD(+)-binding site is contributed by glutamate 405.

It belongs to the aldehyde dehydrogenase family. In terms of assembly, homotetramer.

The protein localises to the cytoplasm. Its subcellular location is the cytosol. It carries out the reaction 4-(trimethylamino)butanal + NAD(+) + H2O = 4-(trimethylamino)butanoate + NADH + 2 H(+). The catalysed reaction is an aldehyde + NAD(+) + H2O = a carboxylate + NADH + 2 H(+). The protein operates within amine and polyamine biosynthesis; carnitine biosynthesis. Converts gamma-trimethylaminobutyraldehyde into gamma-butyrobetaine with high efficiency (in vitro). Can catalyze the irreversible oxidation of a broad range of aldehydes to the corresponding acids in an NAD-dependent reaction, but with low efficiency. This Danio rerio (Zebrafish) protein is 4-trimethylaminobutyraldehyde dehydrogenase A (aldh9a1a).